A 184-amino-acid polypeptide reads, in one-letter code: Effector CFEM1 (184 aa).

A signal peptide spans 1 to 17; it reads MKYSVAFVALAAVAAQA. The region spanning 18-112 is the CFEM domain; it reads QSLADVPKCA…PTTTAAATST (95 aa). Disulfide bonds link Cys26–Cys68, Cys30–Cys63, Cys41–Cys48, and Cys50–Cys85. Asp45 lines the heme pocket. 2 disordered regions span residues 83 to 106 and 136 to 163; these read NLCK…PTTT and IIPT…EQAN. The segment covering 88-103 has biased composition (basic and acidic residues); it reads PPKESEAKSTAEEEKP. Asn163 carries GPI-anchor amidated asparagine lipidation. The propeptide at 164–184 is removed in mature form; that stretch reads GAAGLKGLGALAMAAFAALAL.

It belongs to the RBT5 family. In terms of assembly, interacts with Z.mays LRR5; the interaction is direct. Interacts (via CFEM domain) with Z.mays WAK17 isoform 2; the interaction is direct.

Its subcellular location is the secreted. The protein resides in the cell wall. It localises to the cell membrane. It is found in the cell septum. The protein localises to the cytoplasm. Functionally, suppresses host programmed cell death during infection by binding to Z.mays WAK17 isoform 2 and Z.mays LRR5, to prevent activation of Z.mays WAK17 isoform 1 and the downstream hypersensitive response. This Gibberella zeae (strain ATCC MYA-4620 / CBS 123657 / FGSC 9075 / NRRL 31084 / PH-1) (Wheat head blight fungus) protein is Effector CFEM1.